We begin with the raw amino-acid sequence, 112 residues long: Nitrogen regulatory protein GlnK2 (112 aa).

ADP-binding positions include T29, 38–39 (QQ), V64, and 87–90 (GDGK). ATP is bound by residues T29, 38 to 39 (QQ), V64, 87 to 90 (GDGK), and 101 to 103 (RIR).

It belongs to the P(II) protein family. Homotrimer. Interacts and forms a complex with Amt2.

The protein localises to the cytoplasm. Its activity is regulated as follows. Binding of adenosine nucleotides results in distinct, cooperative behavior for ATP and ADP. GlnK2 is completely insensitive to 2-oxoglutarate at a low level of intracellular nitrogen. In terms of biological role, involved in the regulation of nitrogen metabolism. Regulates the activity of its targets by protein-protein interaction in response to the nitrogen status of the cell. Regulates the activity of the ammonia channel Amt2 via direct interaction. This is Nitrogen regulatory protein GlnK2 from Archaeoglobus fulgidus (strain ATCC 49558 / DSM 4304 / JCM 9628 / NBRC 100126 / VC-16).